A 230-amino-acid chain; its full sequence is MRLVGLTGGIASGKSTISNLFKASGIPVVDADIVARNVVQKGTGGWKKIVEAFGNDVLLENGEIDRARLGQIVFSDPEKRQVLNRLLAPHISSGIFWEILKLWIKGCKVIVLDIPLLFETKMDQWTHPVIVVWVNEATQIERLMSRDGCSEEQARNRINAQLALDWKKSQADIVIDNSGTLDETKEKFQEVLRNVSEPLTWKERLRSRDGLFSVVVCTAVGVLLAQKNLL.

The DPCK domain maps to 3 to 206 (LVGLTGGIAS…EPLTWKERLR (204 aa)). 8–15 (GGIASGKS) provides a ligand contact to ATP.

It belongs to the CoaE family.

The enzyme catalyses 3'-dephospho-CoA + ATP = ADP + CoA + H(+). It functions in the pathway cofactor biosynthesis; coenzyme A biosynthesis; CoA from (R)-pantothenate: step 5/5. Its function is as follows. Catalyzes the phosphorylation of the 3'-hydroxyl group of dephosphocoenzyme A to form coenzyme A. This Oryza sativa subsp. japonica (Rice) protein is Dephospho-CoA kinase.